A 205-amino-acid chain; its full sequence is UPF0688 protein C1orf174 homolog (205 aa).

A compositionally biased stretch (basic residues) spans 1 to 18 (MRKRKLSDRVRCSARLKN). Disordered regions lie at residues 1-128 (MRKR…PSKV) and 184-205 (AKEEEEDDDDDYADGLVNEGNI). Positions 46–63 (NTDKKSPKKLENDEKGLM) are enriched in basic and acidic residues. The span at 71–108 (INKTDNTASNESNAGNVNTCPSASPFSDLNEVSRNGLT) shows a compositional bias: polar residues. Over residues 187 to 196 (EEEDDDDDYA) the composition is skewed to acidic residues.

This sequence belongs to the UPF0688 family.

The protein resides in the nucleus. The chain is UPF0688 protein C1orf174 homolog from Xenopus laevis (African clawed frog).